A 578-amino-acid polypeptide reads, in one-letter code: Arginine--tRNA ligase (578 aa).

The 'HIGH' region motif lies at 122–132; it reads PNLAKEMHVGH.

This sequence belongs to the class-I aminoacyl-tRNA synthetase family. In terms of assembly, monomer.

The protein resides in the cytoplasm. The catalysed reaction is tRNA(Arg) + L-arginine + ATP = L-arginyl-tRNA(Arg) + AMP + diphosphate. The polypeptide is Arginine--tRNA ligase (Pseudoalteromonas atlantica (strain T6c / ATCC BAA-1087)).